Consider the following 78-residue polypeptide: Large ribosomal subunit protein uL30 (78 aa).

Acidic residues predominate over residues 58–68 (DDTSPDAETGA). Residues 58 to 78 (DDTSPDAETGADLERDGGNRS) form a disordered region. Basic and acidic residues predominate over residues 69-78 (DLERDGGNRS).

This sequence belongs to the universal ribosomal protein uL30 family. As to quaternary structure, part of the 50S ribosomal subunit.

The chain is Large ribosomal subunit protein uL30 from Roseiflexus sp. (strain RS-1).